The chain runs to 447 residues: UDP-N-acetylmuramoylalanine--D-glutamate ligase (447 aa).

112 to 118 (GTNGKST) lines the ATP pocket.

This sequence belongs to the MurCDEF family.

It is found in the cytoplasm. It catalyses the reaction UDP-N-acetyl-alpha-D-muramoyl-L-alanine + D-glutamate + ATP = UDP-N-acetyl-alpha-D-muramoyl-L-alanyl-D-glutamate + ADP + phosphate + H(+). It participates in cell wall biogenesis; peptidoglycan biosynthesis. Cell wall formation. Catalyzes the addition of glutamate to the nucleotide precursor UDP-N-acetylmuramoyl-L-alanine (UMA). This Legionella pneumophila (strain Paris) protein is UDP-N-acetylmuramoylalanine--D-glutamate ligase.